We begin with the raw amino-acid sequence, 264 residues long: Shikimate dehydrogenase (NADP(+)) (264 aa).

Shikimate-binding positions include 14 to 16 (SLS) and T59. K63 (proton acceptor) is an active-site residue. An NADP(+)-binding site is contributed by E75. Residues N84 and D99 each contribute to the shikimate site. NADP(+)-binding positions include 122–126 (GAGGA), 144–149 (NRTPSK), and I205. Shikimate is bound at residue Y207. NADP(+) is bound at residue G228.

Belongs to the shikimate dehydrogenase family. In terms of assembly, homodimer.

It catalyses the reaction shikimate + NADP(+) = 3-dehydroshikimate + NADPH + H(+). Its pathway is metabolic intermediate biosynthesis; chorismate biosynthesis; chorismate from D-erythrose 4-phosphate and phosphoenolpyruvate: step 4/7. Its function is as follows. Involved in the biosynthesis of the chorismate, which leads to the biosynthesis of aromatic amino acids. Catalyzes the reversible NADPH linked reduction of 3-dehydroshikimate (DHSA) to yield shikimate (SA). The chain is Shikimate dehydrogenase (NADP(+)) from Pyrococcus abyssi (strain GE5 / Orsay).